A 114-amino-acid chain; its full sequence is uncharacterized protein (114 aa).

Cysteine 10 is an active-site residue.

This sequence belongs to the ArsC family.

This is an uncharacterized protein from Haemophilus influenzae (strain ATCC 51907 / DSM 11121 / KW20 / Rd).